The sequence spans 294 residues: Phosphonoacetaldehyde hydrolase (294 aa).

Catalysis depends on aspartate 19, which acts as the Nucleophile. 2 residues coordinate Mg(2+): aspartate 19 and alanine 21. The Schiff-base intermediate with substrate role is filled by lysine 60. Mg(2+) is bound at residue aspartate 193.

The protein belongs to the HAD-like hydrolase superfamily. PhnX family. In terms of assembly, homodimer. Mg(2+) serves as cofactor.

It carries out the reaction phosphonoacetaldehyde + H2O = acetaldehyde + phosphate + H(+). In terms of biological role, involved in phosphonate degradation. The sequence is that of Phosphonoacetaldehyde hydrolase from Hahella chejuensis (strain KCTC 2396).